The sequence spans 671 residues: Phosphoenolpyruvate carboxykinase (ATP) 1 (671 aa).

Positions 1-10 (MSAGNGNATN) are enriched in low complexity. The disordered stretch occupies residues 1–44 (MSAGNGNATNGDGGFSFPKGPVMPKITTGAAKRGSGVCHDDSGP). Serine 2 bears the N-acetylserine mark. Phosphoserine is present on serine 62. Threonine 66 carries the phosphothreonine modification. Positions 100 to 127 (TRESGPKVVRGDPAEKKTDGSTTPAYAH) are disordered. Residues 108-118 (VRGDPAEKKTD) are compositionally biased toward basic and acidic residues. Arginine 189 provides a ligand contact to substrate. Residues histidine 270 and asparagine 271 each coordinate Ca(2+). Substrate-binding residues include tyrosine 328 and lysine 334. ATP contacts are provided by residues lysine 334, histidine 353, and 369–377 (GLSGTGKTT). Mn(2+)-binding residues include lysine 334 and histidine 353. Aspartate 390 serves as a coordination point for Mn(2+). Glycine 404 serves as a coordination point for Ca(2+). Residues glutamate 418, arginine 455, 574–575 (RI), isoleucine 575, and threonine 580 contribute to the ATP site. Arginine 455 is a substrate binding site.

This sequence belongs to the phosphoenolpyruvate carboxykinase (ATP) family. As to quaternary structure, monomer. Requires Mn(2+) as cofactor. Expressed in cotyledons, flowers, siliques, seeds, leaves, stems and roots. Localized in mid-veins.

The protein resides in the cytoplasm. The enzyme catalyses oxaloacetate + ATP = phosphoenolpyruvate + ADP + CO2. The protein operates within carbohydrate biosynthesis; gluconeogenesis. Allosterically activated by calcium. It may represent the only case of a monomeric, allosteric enzyme. Its function is as follows. Involved in the gluconeogenesis. Catalyzes the conversion of oxaloacetate (OAA) to phosphoenolpyruvate (PEP) through direct phosphoryl transfer between the nucleoside triphosphate and OAA. The protein is Phosphoenolpyruvate carboxykinase (ATP) 1 of Arabidopsis thaliana (Mouse-ear cress).